A 392-amino-acid chain; its full sequence is MALETKPAQDPATEIKHELDPKRKAALDTALAQVEKSFGKGSAMRLGDQPVQNVEVIPTGSLALDMALGIGGLPKGRIVEIYGPESSGKTTLALHVVANAQKKGGVAAYIDAEHALDPAYARKLGVDTDSLIVSQPDNGEQALEIADMLIRSGALDVIVIDSVAALVPKAEIEGEMGDSHVGLQARLMSQALRKMTGALAQAGTTAIFINQLREKIGVFFGNPETTTGGKALKFYASVRLDIRRIQTLKNGDEAVGNRTRVKVVKNKMAPPFKSAEFDMLYGEGISREGSVIDMAQQVGVVKKSGSWFTYEGDQLGQGREKVRQFLKDNPAITEEIENKVKAEFGLIGSADQFAEDEDAAAAAAVSEAAAADAAKDTKATAAPAAKSSRAKA.

The interval 1-21 is disordered; the sequence is MALETKPAQDPATEIKHELDP. 83–90 contacts ATP; the sequence is GPESSGKT. The disordered stretch occupies residues 372-392; it reads DAAKDTKATAAPAAKSSRAKA. Residues 379 to 392 show a composition bias toward low complexity; sequence ATAAPAAKSSRAKA.

This sequence belongs to the RecA family.

It is found in the cytoplasm. Can catalyze the hydrolysis of ATP in the presence of single-stranded DNA, the ATP-dependent uptake of single-stranded DNA by duplex DNA, and the ATP-dependent hybridization of homologous single-stranded DNAs. It interacts with LexA causing its activation and leading to its autocatalytic cleavage. This Bifidobacterium breve protein is Protein RecA.